The primary structure comprises 110 residues: Multidrug transporter EmrE (110 aa).

Helical transmembrane passes span 4–21 (YIYLGGAILAEVIGTTLM), 34–52 (VGTIICYCASFWLLAQTLA), 58–80 (IAYAIWSGVGIVLISLLSWGFFG), and 87–104 (AIIGMMLICAGVLIINLL).

Belongs to the drug/metabolite transporter (DMT) superfamily. Small multidrug resistance (SMR) (TC 2.A.7.1) family. Homodimer. Forms an antiparallel dimeric structure. Also forms dimers of homodimers.

The protein localises to the cell inner membrane. Substrate identity influences both the ground-state and transition-state energies for the conformational exchange process, emphasizing the coupling between substrate binding and transport. Functionally, multidrug efflux protein that confers resistance to a wide range of toxic compounds, including ethidium, methyl viologen, acriflavine, tetraphenylphosphonium (TPP(+)), benzalkonium, propidium, dequalinium and the aminoglycoside antibiotics streptomycin and tobramycin. Can also transport the osmoprotectants betaine and choline. The drug efflux is coupled to an influx of protons. Can couple antiport of a drug to either one or two protons, performing both electrogenic and electroneutral transport of a single substrate. Simultaneously binds and cotransports proton and drug. The polypeptide is Multidrug transporter EmrE (emrE) (Escherichia coli (strain K12)).